The chain runs to 891 residues: Dynein axonemal intermediate chain 3 (891 aa).

Positions 1 to 17 (MAPKQKKKTSRGKKRLK) are enriched in basic residues. Positions 1–22 (MAPKQKKKTSRGKKRLKPVLAA) are disordered. WD repeat units lie at residues 395-435 (ESPD…DRIE), 477-533 (GHKK…PLTP), 670-709 (IHDG…GPLL), and 713-753 (CAPK…HEPA). Residues 818-861 (LEYVEQRKKIREQEKKEMELEMAKKKVKTYQKSKEQMQAELKMD) are a coiled coil.

Interacts with ACTR2; this interaction reduces binding of the Arp2/3 complex to the VCA domain of nucleation promoting factors. Part of the multisubunit axonemal dynein complex formed at least of two heavy chains and a number of intermediate and light chains. Found in a associated with the catalytic heavy chain DNAH2, the intermediate chain DNAI4, and the light chain DYNLT1.

The protein localises to the cytoplasm. Acts as a negative regulator of cell migration, invasion, and metastasis downstream of p53/TP53, through inhibition of Arp2/3 complex-mediated actin polymerization. Via its association with the multisubunit axonemal dynein complex, is potentially involved in the regulation of cilia function. May play a role in osteogenesis of dental tissue-derived mesenchymal stem cells. This chain is Dynein axonemal intermediate chain 3, found in Homo sapiens (Human).